The sequence spans 152 residues: uncharacterized protein (152 aa).

The next 4 membrane-spanning stretches (helical) occupy residues 2–22, 26–46, 92–112, and 128–148; these read ENLIVAISNFPAVLPIGLSFL, FITFGTITFVSIASFISHLIE, VVPIVNNKWLFAMTIPVFILL, and YIITHCMWHAGIFGLMYYFLK.

The protein localises to the membrane. This is an uncharacterized protein from Acanthamoeba polyphaga mimivirus (APMV).